A 159-amino-acid chain; its full sequence is Transcriptional repressor NrdR (159 aa).

Residues 3 to 34 fold into a zinc finger; sequence CPFCRHEDTQVVDSRVSEDGAAIRRRRRCSAC. The ATP-cone domain maps to 49–139; that stretch reads PAVVKKDGSR…VYRRFEDVSE (91 aa).

It belongs to the NrdR family. Zn(2+) is required as a cofactor.

Its function is as follows. Negatively regulates transcription of bacterial ribonucleotide reductase nrd genes and operons by binding to NrdR-boxes. The polypeptide is Transcriptional repressor NrdR (Burkholderia vietnamiensis (strain G4 / LMG 22486) (Burkholderia cepacia (strain R1808))).